Consider the following 633-residue polypeptide: Chitinase 2 (633 aa).

The region spanning 151-602 (PKLSAYITDW…NAAREGLGYV (452 aa)) is the GH18 domain. Chitin contacts are provided by residues 275–276 (QN) and 306–309 (GGWS). Glutamate 349 serves as the catalytic Proton donor. Chitin is bound by residues tyrosine 350, 422 to 425 (MSYD), and tryptophan 582.

Belongs to the glycosyl hydrolase 18 family. In terms of assembly, semipurified toxin complex consists of at least YenA1-YenA2-YenB-YenC1-YenC2-Chi1-Chi2. The Yen-TC:K9 subcomplex is about 26 nm tall and 22 nm in diameter with 5-fold symmetry and 5 copies of YenA1, YenA2, Chi1 and Chi2; the chitinase subunits may be solvent accessible on the exterior the complex. The Yen-TC:K9 subcomplex has no insecticidal activity. The native complex with additional YenB, YenC1 and YenC2 subunits is 16 nm taller and is insecticidal; the toxicity-conferring subunits are present at about 1 copy each.

It localises to the secreted. The enzyme catalyses Random endo-hydrolysis of N-acetyl-beta-D-glucosaminide (1-&gt;4)-beta-linkages in chitin and chitodextrins.. Toxin complex is secreted when grown at 25 degrees Celsius or less; at higher temperatures the proteins are present intracellularly but not secreted. Functionally, part of an orally active toxin complex (TC) with strong insecticidal effects on larvae of the Coleoptera Costelytra zealandica, Acrossidius tasmania and Adoryphorus couloni and some Lepidoptera larvae. The TC has an endochitinase activity. This subunit might aid infection by degradation of the larval peritrophic membrane. This is Chitinase 2 from Yersinia entomophaga.